A 273-amino-acid polypeptide reads, in one-letter code: NADPH-dependent 7-cyano-7-deazaguanine reductase (273 aa).

V81–S83 provides a ligand contact to substrate. NADPH is bound at residue S83 to K84. Residue C179 is the Thioimide intermediate of the active site. Residue D186 is the Proton donor of the active site. Substrate is bound at residue A218–E219. R247–G248 is a binding site for NADPH.

The protein belongs to the GTP cyclohydrolase I family. QueF type 2 subfamily. In terms of assembly, homodimer.

It is found in the cytoplasm. It carries out the reaction 7-aminomethyl-7-carbaguanine + 2 NADP(+) = 7-cyano-7-deazaguanine + 2 NADPH + 3 H(+). Its pathway is tRNA modification; tRNA-queuosine biosynthesis. In terms of biological role, catalyzes the NADPH-dependent reduction of 7-cyano-7-deazaguanine (preQ0) to 7-aminomethyl-7-deazaguanine (preQ1). The chain is NADPH-dependent 7-cyano-7-deazaguanine reductase from Rickettsia bellii (strain OSU 85-389).